Consider the following 279-residue polypeptide: Phosphonates import ATP-binding protein PhnC 2 (279 aa).

Positions 10–253 (LSLKGVSVRY…VARNLYAKQS (244 aa)) constitute an ABC transporter domain. ATP is bound at residue 43–50 (GASGAGKS). The span at 253–262 (SNASNTSAST) shows a compositional bias: low complexity. Residues 253–279 (SNASNTSASTDSPRTLQSSQTKELLPC) form a disordered region. Residues 263 to 279 (DSPRTLQSSQTKELLPC) show a composition bias toward polar residues.

The protein belongs to the ABC transporter superfamily. Phosphonates importer (TC 3.A.1.9.1) family. As to quaternary structure, the complex is composed of two ATP-binding proteins (PhnC), two transmembrane proteins (PhnE) and a solute-binding protein (PhnD).

It is found in the cell inner membrane. The catalysed reaction is phosphonate(out) + ATP + H2O = phosphonate(in) + ADP + phosphate + H(+). Part of the ABC transporter complex PhnCDE involved in phosphonates import. Responsible for energy coupling to the transport system. In Cupriavidus metallidurans (strain ATCC 43123 / DSM 2839 / NBRC 102507 / CH34) (Ralstonia metallidurans), this protein is Phosphonates import ATP-binding protein PhnC 2.